Reading from the N-terminus, the 213-residue chain is Orotate phosphoribosyltransferase (213 aa).

Lys26 is a 5-phospho-alpha-D-ribose 1-diphosphate binding site. 34–35 (FF) contributes to the orotate binding site. 5-phospho-alpha-D-ribose 1-diphosphate is bound by residues 72-73 (YK), Arg99, Lys100, Lys103, His105, and 124-132 (DDVITAGTA). Orotate-binding residues include Thr128 and Arg156.

Belongs to the purine/pyrimidine phosphoribosyltransferase family. PyrE subfamily. In terms of assembly, homodimer. It depends on Mg(2+) as a cofactor.

The catalysed reaction is orotidine 5'-phosphate + diphosphate = orotate + 5-phospho-alpha-D-ribose 1-diphosphate. It participates in pyrimidine metabolism; UMP biosynthesis via de novo pathway; UMP from orotate: step 1/2. Its function is as follows. Catalyzes the transfer of a ribosyl phosphate group from 5-phosphoribose 1-diphosphate to orotate, leading to the formation of orotidine monophosphate (OMP). The protein is Orotate phosphoribosyltransferase of Photobacterium profundum (strain SS9).